The primary structure comprises 337 residues: Heme A synthase (337 aa).

The next 5 membrane-spanning stretches (helical) occupy residues 6 to 26 (ITKW…IGGI), 87 to 107 (FIHR…LIYF), 119 to 139 (LPYI…WYMV), 154 to 174 (LAFH…QLIK), and 192 to 212 (LIFS…GALV). His-256 is a binding site for heme. Helical transmembrane passes span 258–278 (LVGY…LKIE), 285–305 (IAYF…ITLL), and 308–328 (VPII…SIII). His-316 serves as a coordination point for heme.

Belongs to the COX15/CtaA family. Type 2 subfamily. In terms of assembly, interacts with CtaB. It depends on heme b as a cofactor.

The protein localises to the cell membrane. It carries out the reaction Fe(II)-heme o + 2 A + H2O = Fe(II)-heme a + 2 AH2. The protein operates within porphyrin-containing compound metabolism; heme A biosynthesis; heme A from heme O: step 1/1. Functionally, catalyzes the conversion of heme O to heme A by two successive hydroxylations of the methyl group at C8. The first hydroxylation forms heme I, the second hydroxylation results in an unstable dihydroxymethyl group, which spontaneously dehydrates, resulting in the formyl group of heme A. The sequence is that of Heme A synthase from Rickettsia africae (strain ESF-5).